The sequence spans 380 residues: Serpin B7 (380 aa).

At Ser-217 the chain carries Phosphoserine.

It belongs to the serpin family. Ov-serpin subfamily.

The protein resides in the cytoplasm. Its function is as follows. Might function as an inhibitor of Lys-specific proteases. Might influence the maturation of megakaryocytes via its action as a serpin. This is Serpin B7 (Serpinb7) from Mus musculus (Mouse).